Reading from the N-terminus, the 95-residue chain is Aspartyl/glutamyl-tRNA(Asn/Gln) amidotransferase subunit C (95 aa).

It belongs to the GatC family. In terms of assembly, heterotrimer of A, B and C subunits.

The catalysed reaction is L-glutamyl-tRNA(Gln) + L-glutamine + ATP + H2O = L-glutaminyl-tRNA(Gln) + L-glutamate + ADP + phosphate + H(+). The enzyme catalyses L-aspartyl-tRNA(Asn) + L-glutamine + ATP + H2O = L-asparaginyl-tRNA(Asn) + L-glutamate + ADP + phosphate + 2 H(+). Functionally, allows the formation of correctly charged Asn-tRNA(Asn) or Gln-tRNA(Gln) through the transamidation of misacylated Asp-tRNA(Asn) or Glu-tRNA(Gln) in organisms which lack either or both of asparaginyl-tRNA or glutaminyl-tRNA synthetases. The reaction takes place in the presence of glutamine and ATP through an activated phospho-Asp-tRNA(Asn) or phospho-Glu-tRNA(Gln). The sequence is that of Aspartyl/glutamyl-tRNA(Asn/Gln) amidotransferase subunit C from Bradyrhizobium sp. (strain BTAi1 / ATCC BAA-1182).